The following is a 316-amino-acid chain: Transcription initiation factor IIB (316 aa).

Residues 11–42 form a TFIIB-type zinc finger; that stretch reads PRVTCPNHPDAILVEDYRAGDMICPECGLVVG. Zn(2+) is bound by residues cysteine 15, histidine 18, cysteine 34, and cysteine 37. Phosphoserine occurs at positions 70, 76, and 92. 2 tandem repeats follow at residues 124–200 and 218–294. DNA is bound by residues lysine 152, arginine 154, lysine 189, and lysine 196. Residues 189–193 are core promoter DNA-binding; it reads KEIGR. The residue at position 238 (lysine 238) is an N6-acetyllysine; by autocatalysis. The tract at residues 244-316 is necessary for TATA box-bound TBP complex formation; the sequence is LVPGRSPISV…DTPVDKLPQL (73 aa). A DNA-binding site is contributed by arginine 248. The core promoter DNA-binding stretch occupies residues 249–252; the sequence is SPIS. Positions 272, 281, 284, 286, and 290 each coordinate DNA. The interval 283–286 is core promoter DNA-binding; it reads VTIR.

Belongs to the TFIIB family. In terms of assembly, found in a ternary complex with TATA box-bound TBP. Part of a TFIID-containing RNA polymerase II pre-initiation complex (PIC) that is composed of TBP and at least GTF2A1, GTF2A2, GTF2E1, GTF2E2, GTF2F1, GTF2H2, GTF2H3, GTF2H4, GTF2H5, GTF2B, TCEA1, ERCC2, ERCC3, TAF1, TAF2, TAF3, TAF4, TAF5, TAF6, TAF7, TAF8, TAF9, TAF10, TAF11, TAF12 and TAF13. Associates with TFIID-TFIIA (DA complex) to form TFIID-TFIIA-TFIIB (DAB complex), which is then recognized by RNA polymerase II (Pol II). Found in a RNA polymerase II initiation complex. Interacts (via C-terminus) with TBP; this interaction with TATA box-bound TBP guides Pol II into the PIC. Interacts (via N-terminus) with Pol II. Interacts (via C-terminus) with SSU72; this interaction is inhibited by SYMPK. Interacts with NR2F1; this interaction is direct. Interacts with PGR. Interacts with ESR1. Interacts with GTF2F1 (via C-terminus and preferentially via acetylated form); this interaction prevents binding of GTF2B to GTF2F2. Interacts with GTF2F2 (via N-terminus); this interaction is inhibited in presence of GTF2F1. Interacts with the transcription elongation factor TCEA2. Interacts with HSF1 (via transactivation domain). Interacts with GPBP1. Post-translationally, acetylated. Autoacetylated; autoacetylation at Lys-238 stimulates transcription activation.

The protein resides in the nucleus. The protein localises to the chromosome. It catalyses the reaction L-lysyl-[protein] + acetyl-CoA = N(6)-acetyl-L-lysyl-[protein] + CoA + H(+). In terms of biological role, general transcription factor that plays a role in transcription initiation by RNA polymerase II (Pol II). Involved in the pre-initiation complex (PIC) formation and Pol II recruitment at promoter DNA. Together with the TATA box-bound TBP forms the core initiation complex and provides a bridge between TBP and the Pol II-TFIIF complex. Released from the PIC early following the onset of transcription during the initiation and elongation transition and reassociates with TBP during the next transcription cycle. Associates with chromatin to core promoter-specific regions. Binds to two distinct DNA core promoter consensus sequence elements in a TBP-independent manner; these IIB-recognition elements (BREs) are localized immediately upstream (BREu), 5'-[GC][GC][GA]CGCC-3', and downstream (BREd), 5'-[GA]T[TGA][TG][GT][TG][TG]-3', of the TATA box element. Modulates transcription start site selection. Also exhibits autoacetyltransferase activity that contributes to the activated transcription. The sequence is that of Transcription initiation factor IIB from Mus musculus (Mouse).